A 129-amino-acid polypeptide reads, in one-letter code: Lysozyme C, milk isozyme (129 aa).

Residues 1–129 (KVFSKCELAH…LSEYLASCNL (129 aa)) enclose the C-type lysozyme domain. Disulfide bonds link cysteine 6-cysteine 127, cysteine 30-cysteine 115, cysteine 65-cysteine 80, and cysteine 76-cysteine 94. Catalysis depends on residues glutamate 35 and aspartate 53. Positions 82, 85, 87, 90, and 91 each coordinate Ca(2+).

This sequence belongs to the glycosyl hydrolase 22 family. Monomer. Ca(2+) is required as a cofactor.

It carries out the reaction Hydrolysis of (1-&gt;4)-beta-linkages between N-acetylmuramic acid and N-acetyl-D-glucosamine residues in a peptidoglycan and between N-acetyl-D-glucosamine residues in chitodextrins.. Functionally, lysozymes have primarily a bacteriolytic function; those in tissues and body fluids are associated with the monocyte-macrophage system and enhance the activity of immunoagents. This chain is Lysozyme C, milk isozyme (LYZ), found in Equus caballus (Horse).